The primary structure comprises 142 residues: MRHSKSGRKLNRTASHRKAMFANMAISLIEHEQIVTTLPKAKEIRPIVERLVTLGKRGGLHARRQAIASLRDAGKVAKLFDTLAPRYASRNGGYLRIMKAGFRTGDNAPMAVIEFVDRDVDAKGAVDRVRTESSANEKEASS.

It belongs to the bacterial ribosomal protein bL17 family. As to quaternary structure, part of the 50S ribosomal subunit. Contacts protein L32.

This chain is Large ribosomal subunit protein bL17, found in Bartonella henselae (strain ATCC 49882 / DSM 28221 / CCUG 30454 / Houston 1) (Rochalimaea henselae).